Consider the following 452-residue polypeptide: Bifunctional protein GlmU (452 aa).

The tract at residues 1–232 (MTSRTSLTIV…EDEVRGINTK (232 aa)) is pyrophosphorylase. UDP-N-acetyl-alpha-D-glucosamine-binding positions include 11-14 (LAAG), lysine 25, glutamine 78, and 83-84 (GT). Aspartate 108 serves as a coordination point for Mg(2+). Glycine 144, glutamate 158, asparagine 173, and asparagine 230 together coordinate UDP-N-acetyl-alpha-D-glucosamine. Asparagine 230 is a Mg(2+) binding site. Residues 233 to 253 (AQLAEAEAVMQARLRQAALDA) form a linker region. An N-acetyltransferase region spans residues 254-452 (GVTMIAPETV…KTRGKTRPAK (199 aa)). UDP-N-acetyl-alpha-D-glucosamine-binding residues include arginine 319 and lysine 337. Catalysis depends on histidine 349, which acts as the Proton acceptor. Tyrosine 352 and asparagine 363 together coordinate UDP-N-acetyl-alpha-D-glucosamine. Residues alanine 366, 372 to 373 (NY), serine 391, serine 409, and arginine 426 each bind acetyl-CoA.

In the N-terminal section; belongs to the N-acetylglucosamine-1-phosphate uridyltransferase family. This sequence in the C-terminal section; belongs to the transferase hexapeptide repeat family. As to quaternary structure, homotrimer. Mg(2+) serves as cofactor.

It is found in the cytoplasm. It catalyses the reaction alpha-D-glucosamine 1-phosphate + acetyl-CoA = N-acetyl-alpha-D-glucosamine 1-phosphate + CoA + H(+). It carries out the reaction N-acetyl-alpha-D-glucosamine 1-phosphate + UTP + H(+) = UDP-N-acetyl-alpha-D-glucosamine + diphosphate. It functions in the pathway nucleotide-sugar biosynthesis; UDP-N-acetyl-alpha-D-glucosamine biosynthesis; N-acetyl-alpha-D-glucosamine 1-phosphate from alpha-D-glucosamine 6-phosphate (route II): step 2/2. It participates in nucleotide-sugar biosynthesis; UDP-N-acetyl-alpha-D-glucosamine biosynthesis; UDP-N-acetyl-alpha-D-glucosamine from N-acetyl-alpha-D-glucosamine 1-phosphate: step 1/1. The protein operates within bacterial outer membrane biogenesis; LPS lipid A biosynthesis. Functionally, catalyzes the last two sequential reactions in the de novo biosynthetic pathway for UDP-N-acetylglucosamine (UDP-GlcNAc). The C-terminal domain catalyzes the transfer of acetyl group from acetyl coenzyme A to glucosamine-1-phosphate (GlcN-1-P) to produce N-acetylglucosamine-1-phosphate (GlcNAc-1-P), which is converted into UDP-GlcNAc by the transfer of uridine 5-monophosphate (from uridine 5-triphosphate), a reaction catalyzed by the N-terminal domain. This is Bifunctional protein GlmU from Rhodopseudomonas palustris (strain BisA53).